Here is a 441-residue protein sequence, read N- to C-terminus: MFDTIAAVSSPHGTGAIAVIRIDGPKSHDIAKKLTGLNKVEYRRVYTTYLNFEGDILDQVNIVFFKSPNSYTGNDLIEIYTHGGILVTQNVLDAILKSGARIAKRGEFTKRGFLNGKISLVQAEAIYQIIEAKSEVSLKMSLQNLKGKLGEEIEYYRGEILNVLSEIEVTFDYPDDIELDEKSILNLLSKLKDEVGRKIEDSKKSIMLNNGIVMTIVGKPNSGKSTLLNRLLLEDRAIVTDIPGTTRDVIKGEIEINGIRFVIVDTAGIRETKDVVEKIGIERSLKEIQKADVILFVLDATTGFTKEDKLILRKIEGGNYIPVWNKCDEGNNFNKIFDGEIKISALNGEGLKNLENKIVSKVKNIIESGTASHVITQRQVEILERVYTHLESAVNNLNMGYEIDLISIDLRRALEELDMLIGRKFSDDLLDNIFSNFCVGK.

(6S)-5-formyl-5,6,7,8-tetrahydrofolate is bound by residues Arg-21, Glu-78, and Lys-117. The 153-residue stretch at 211–363 (GIVMTIVGKP…LENKIVSKVK (153 aa)) folds into the TrmE-type G domain. Asn-221 is a binding site for K(+). GTP is bound by residues 221-226 (NSGKST), 240-246 (TDIPGTT), and 265-268 (DTAG). Ser-225 provides a ligand contact to Mg(2+). Residues Thr-240, Ile-242, and Thr-245 each coordinate K(+). Residue Thr-246 coordinates Mg(2+). (6S)-5-formyl-5,6,7,8-tetrahydrofolate is bound at residue Lys-441.

This sequence belongs to the TRAFAC class TrmE-Era-EngA-EngB-Septin-like GTPase superfamily. TrmE GTPase family. As to quaternary structure, homodimer. Heterotetramer of two MnmE and two MnmG subunits. It depends on K(+) as a cofactor.

The protein localises to the cytoplasm. Exhibits a very high intrinsic GTPase hydrolysis rate. Involved in the addition of a carboxymethylaminomethyl (cmnm) group at the wobble position (U34) of certain tRNAs, forming tRNA-cmnm(5)s(2)U34. In Thermosipho melanesiensis (strain DSM 12029 / CIP 104789 / BI429), this protein is tRNA modification GTPase MnmE.